The chain runs to 620 residues: MALLQISEPGMSAAPHRHRLAAGIDLGTTNSLVATVRSGSAACLPDAEGRVTLPSVVRYLENGGIEVGKTALSAQKTDPLNTVSSAKRLIGRTLADLHQNTHYLPYRFGDNQRVIELHTRQGVKTPVEVSAEILKTLKSRAEETLGGDLVGVVITVPAYFDDAQRQATKDAARLAGLNVLRLLNEPTAAAIAYGLDNASEGTFVVYDLGGGTFDVSVLQLTKGLFEVKATGGNSALGGDDFDHRLFCRLLEQNGLSQLNEQDSQLLLSLVRAAKEQLTTQTEARIQATLSDGMAIDTSISRAEFHNLTQHLVMKTLEPVTQALKDAGVGKNEVKGVIMVGGSTRMLHVQQAVATFFGQTPLNNLNPDEVVALGAAIQANVLAGNKTDGEWLLLDVTPLSLGLETYGGLAEKIIPRNSTIPTARAQDFTTFKDGQTAMTIHVVQGERELVADCRSLAKFTLRGIPPMAAGAARIRVTFQIDADGLLSVSAQEQSTGVQAQIEVKPSYGLDDDTITQMLKDSMSNAAEDMAARARAEAVVEAESLTDAVNAALELDSDLLDAEELQQIRQGIADLQGRLKDGKAEDIRAAAAKLGSITDNFAAKRMNRNIQRALTGQSVDNI.

Belongs to the heat shock protein 70 family.

Its function is as follows. Chaperone involved in the maturation of iron-sulfur cluster-containing proteins. Has a low intrinsic ATPase activity which is markedly stimulated by HscB. The sequence is that of Chaperone protein HscA homolog from Neisseria meningitidis serogroup B (strain ATCC BAA-335 / MC58).